The primary structure comprises 167 residues: Dihydrofolate reductase (167 aa).

The region spanning Met-1–Lys-162 is the DHFR domain. NADP(+) is bound by residues Ala-7 and Leu-13–Leu-19. Asp-27 serves as a coordination point for substrate. Residue Lys-45–Thr-46 coordinates NADP(+). Position 58 (Arg-58) interacts with substrate. NADP(+) contacts are provided by residues Thr-64–Thr-65 and Gly-99–Ala-106. Thr-117 contacts substrate.

This sequence belongs to the dihydrofolate reductase family.

It catalyses the reaction (6S)-5,6,7,8-tetrahydrofolate + NADP(+) = 7,8-dihydrofolate + NADPH + H(+). The protein operates within cofactor biosynthesis; tetrahydrofolate biosynthesis; 5,6,7,8-tetrahydrofolate from 7,8-dihydrofolate: step 1/1. Key enzyme in folate metabolism. Catalyzes an essential reaction for de novo glycine and purine synthesis, and for DNA precursor synthesis. The sequence is that of Dihydrofolate reductase (folA) from Enterococcus faecium (Streptococcus faecium).